Reading from the N-terminus, the 1066-residue chain is Beta-galactosidase (1066 aa).

Substrate is bound by residues asparagine 110 and aspartate 209. Aspartate 209 is a Na(+) binding site. Residues glutamate 432, histidine 434, and glutamate 477 each coordinate Mg(2+). Residues glutamate 477 and 553–556 each bind substrate; that span reads EYAH. Glutamate 477 (proton donor) is an active-site residue. Glutamate 553 functions as the Nucleophile in the catalytic mechanism. Asparagine 613 serves as a coordination point for Mg(2+). Na(+) contacts are provided by phenylalanine 617 and asparagine 620. Substrate-binding residues include asparagine 620 and tryptophan 1041.

Belongs to the glycosyl hydrolase 2 family. In terms of assembly, homotetramer. Requires Mg(2+) as cofactor. The cofactor is Na(+).

It catalyses the reaction Hydrolysis of terminal non-reducing beta-D-galactose residues in beta-D-galactosides.. The sequence is that of Beta-galactosidase from Yersinia pseudotuberculosis serotype IB (strain PB1/+).